The sequence spans 387 residues: Cysteine desulfurase (387 aa).

Pyridoxal 5'-phosphate is bound by residues 72–73 (GT), Asn-152, Gln-180, and 200–202 (SAH). Lys-203 carries the post-translational modification N6-(pyridoxal phosphate)lysine. Thr-238 lines the pyridoxal 5'-phosphate pocket. Cys-326 serves as the catalytic Cysteine persulfide intermediate. Position 326 (Cys-326) interacts with [2Fe-2S] cluster.

The protein belongs to the class-V pyridoxal-phosphate-dependent aminotransferase family. NifS/IscS subfamily. Homodimer. It depends on pyridoxal 5'-phosphate as a cofactor.

The enzyme catalyses (sulfur carrier)-H + L-cysteine = (sulfur carrier)-SH + L-alanine. Its function is as follows. Catalyzes the removal of elemental sulfur atoms from cysteine to produce alanine. Seems to participate in the biosynthesis of the nitrogenase metalloclusters by providing the inorganic sulfur required for the Fe-S core formation. The protein is Cysteine desulfurase of Sinorhizobium fredii (strain NBRC 101917 / NGR234).